We begin with the raw amino-acid sequence, 673 residues long: UvrABC system protein B (673 aa).

Positions 26 to 183 (ANFEAGLAKQ…RHLTDLQYTR (158 aa)) constitute a Helicase ATP-binding domain. Residue 39-46 (GVTGSGKT) participates in ATP binding. The Beta-hairpin motif lies at 92-115 (YYDYYQPEAYVPSSDTFIEKDSSI). A Helicase C-terminal domain is found at 431 to 597 (QVDDLMSEIH…SVERPISDIM (167 aa)). A disordered region spans residues 601–631 (REDAAEKKSGKGRSKSRQVAEETPDYRAMKP). The segment covering 618–630 (QVAEETPDYRAMK) has biased composition (basic and acidic residues). The UVR domain occupies 635–670 (AGKLKSLEQKMYQHAKDLEFEAAAQIRDQIQKLKTA).

The protein belongs to the UvrB family. Forms a heterotetramer with UvrA during the search for lesions. Interacts with UvrC in an incision complex.

The protein resides in the cytoplasm. In terms of biological role, the UvrABC repair system catalyzes the recognition and processing of DNA lesions. A damage recognition complex composed of 2 UvrA and 2 UvrB subunits scans DNA for abnormalities. Upon binding of the UvrA(2)B(2) complex to a putative damaged site, the DNA wraps around one UvrB monomer. DNA wrap is dependent on ATP binding by UvrB and probably causes local melting of the DNA helix, facilitating insertion of UvrB beta-hairpin between the DNA strands. Then UvrB probes one DNA strand for the presence of a lesion. If a lesion is found the UvrA subunits dissociate and the UvrB-DNA preincision complex is formed. This complex is subsequently bound by UvrC and the second UvrB is released. If no lesion is found, the DNA wraps around the other UvrB subunit that will check the other stand for damage. This Xanthomonas oryzae pv. oryzae (strain PXO99A) protein is UvrABC system protein B.